The sequence spans 88 residues: Small ribosomal subunit protein bS20 (88 aa).

It belongs to the bacterial ribosomal protein bS20 family.

Its function is as follows. Binds directly to 16S ribosomal RNA. The protein is Small ribosomal subunit protein bS20 of Brucella abortus (strain S19).